The following is a 78-amino-acid chain: MGSGLPLVLLLTLLGSSHGTGPGMTLQLKLKESFLTNSSYESSFLELLEKLCLLLHLPSGTSVTLHHARSQHHVVCNT.

An N-terminal signal peptide occupies residues 1–19 (MGSGLPLVLLLTLLGSSHG). The N-linked (GlcNAc...) asparagine glycan is linked to asparagine 37.

In terms of processing, N-glycosylated. Predominantly expressed in lung, where it is detected in type II pneumocytes in the alveolus, and in nonciliated epithelium in bronchioli (at protein level). Also detected at lower levels in cervix, esophagus, stomach, testis and kidney.

Its subcellular location is the secreted. It is found in the cytoplasmic vesicle. It localises to the secretory vesicle. The protein resides in the golgi apparatus. Its function is as follows. Putative surfactant protein. In Homo sapiens (Human), this protein is Surfactant-associated protein 2 (SFTA2).